We begin with the raw amino-acid sequence, 276 residues long: NH(3)-dependent NAD(+) synthetase (276 aa).

Residue Gly-43–Ser-50 coordinates ATP. Asp-49 provides a ligand contact to Mg(2+). Arg-146 provides a ligand contact to deamido-NAD(+). Thr-166 serves as a coordination point for ATP. Glu-171 serves as a coordination point for Mg(2+). Lys-179 and Asp-186 together coordinate deamido-NAD(+). The ATP site is built by Lys-195 and Thr-217. His-266–Lys-267 contributes to the deamido-NAD(+) binding site.

The protein belongs to the NAD synthetase family. As to quaternary structure, homodimer.

The enzyme catalyses deamido-NAD(+) + NH4(+) + ATP = AMP + diphosphate + NAD(+) + H(+). The protein operates within cofactor biosynthesis; NAD(+) biosynthesis; NAD(+) from deamido-NAD(+) (ammonia route): step 1/1. Functionally, catalyzes the ATP-dependent amidation of deamido-NAD to form NAD. Uses ammonia as a nitrogen source. This chain is NH(3)-dependent NAD(+) synthetase, found in Vibrio parahaemolyticus serotype O3:K6 (strain RIMD 2210633).